We begin with the raw amino-acid sequence, 189 residues long: Ribosome hibernation promotion factor (189 aa).

The protein belongs to the HPF/YfiA ribosome-associated protein family. Long HPF subfamily. As to quaternary structure, interacts with 100S ribosomes.

Its subcellular location is the cytoplasm. Functionally, required for dimerization of active 70S ribosomes into 100S ribosomes in stationary phase; 100S ribosomes are translationally inactive and sometimes present during exponential growth. In Staphylococcus epidermidis (strain ATCC 35984 / DSM 28319 / BCRC 17069 / CCUG 31568 / BM 3577 / RP62A), this protein is Ribosome hibernation promotion factor.